Reading from the N-terminus, the 333-residue chain is Large ribosomal subunit protein mL39 (333 aa).

In terms of domain architecture, TGS spans 56 to 122 (DKIEVRYLGL…QESCTLQLLN (67 aa)). Positions 311–333 (SKKPSPARLPNEPFEEQQQLQLS) are disordered.

Belongs to the mitochondrion-specific ribosomal protein mL39 family. As to quaternary structure, component of the mitochondrial ribosome large subunit (39S) which comprises a 16S rRNA and about 50 distinct proteins.

Its subcellular location is the mitochondrion. In Drosophila melanogaster (Fruit fly), this protein is Large ribosomal subunit protein mL39 (mRpL39).